A 400-amino-acid polypeptide reads, in one-letter code: 2-octaprenylphenol hydroxylase (400 aa).

Residues 49–52 and 297–303 contribute to the FAD site; these read RVSA and LAGQGVN.

Belongs to the UbiH/COQ6 family. Homotetramer. Component of the Ubi complex metabolon, which regroups five ubiquinone biosynthesis proteins (UbiE, UbiF, UbiG, UbiH and UbiI) and two accessory factors (UbiK and the lipid-binding protein UbiJ). FAD serves as cofactor.

The protein localises to the cytoplasm. It catalyses the reaction 2-all-trans-octaprenylphenol + NADPH + O2 + H(+) = 3-(all-trans-octaprenyl)benzene-1,2-diol + NADP(+) + H2O. The enzyme catalyses a 2-(all-trans-polyprenyl)phenol + NADPH + O2 + H(+) = a 3-(all-trans-polyprenyl)benzene-1,2-diol + NADP(+) + H2O. It functions in the pathway cofactor biosynthesis; ubiquinone biosynthesis. Functionally, FAD-dependent monooxygenase required for the aerobic hydroxylation of 2-octaprenylphenol to 2-octaprenyl-6-hydroxy-phenol, the first hydroxylation step in coenzyme Q (ubiquinone) biosynthesis. The sequence is that of 2-octaprenylphenol hydroxylase from Escherichia coli (strain K12).